The primary structure comprises 982 residues: Nitrate reductase [NADPH] (982 aa).

Residues 1-128 form a disordered region; that stretch reads MEAPALEQRQ…PPSTRLTTIL (128 aa). Over residues 10 to 20 the composition is skewed to basic and acidic residues; the sequence is QSLHDSSERQQ. Positions 63-110 are enriched in low complexity; that stretch reads TASPTTTDFSSSSSDDNSTTLETSVNYSHSSNTNTNTSCPPSPITSSS. Position 240 (cysteine 240) interacts with Mo-molybdopterin. The 76-residue stretch at 617 to 692 folds into the Cytochrome b5 heme-binding domain; that stretch reads TRLITLEELR…MPTYHIGTLT (76 aa). The heme site is built by histidine 652 and histidine 675. The FAD-binding FR-type domain occupies 721 to 836; it reads KTWNSAILTF…KGPVGKFVYQ (116 aa). Residues 776–779, 794–798, 810–812, serine 860, and threonine 863 each bind FAD; these read RAYT, LVKIY, and QMT. Position 952 to 961 (952 to 961) interacts with NADP(+); the sequence is MVLLCGPEGM.

This sequence belongs to the nitrate reductase family. Homodimer. It depends on FAD as a cofactor. Requires heme as cofactor. Mo-molybdopterin is required as a cofactor.

It catalyses the reaction nitrite + NADP(+) + H2O = nitrate + NADPH + H(+). It participates in nitrogen metabolism; nitrate reduction (assimilation). Its function is as follows. Nitrate reductase is a key enzyme involved in the first step of nitrate assimilation in plants, fungi and bacteria. The sequence is that of Nitrate reductase [NADPH] (nit-3) from Neurospora crassa (strain ATCC 24698 / 74-OR23-1A / CBS 708.71 / DSM 1257 / FGSC 987).